Consider the following 921-residue polypeptide: Isoleucine--tRNA ligase 1 (921 aa).

The short motif at 57–67 (PYANGDIHMGH) is the 'HIGH' region element. Glu552 contributes to the L-isoleucyl-5'-AMP binding site. Residues 593–597 (KMSKS) carry the 'KMSKS' region motif. Lys596 contributes to the ATP binding site. Zn(2+) is bound by residues Cys888, Cys891, Cys908, and Cys911.

It belongs to the class-I aminoacyl-tRNA synthetase family. IleS type 1 subfamily. In terms of assembly, monomer. Zn(2+) is required as a cofactor.

It is found in the cytoplasm. The enzyme catalyses tRNA(Ile) + L-isoleucine + ATP = L-isoleucyl-tRNA(Ile) + AMP + diphosphate. Catalyzes the attachment of isoleucine to tRNA(Ile). As IleRS can inadvertently accommodate and process structurally similar amino acids such as valine, to avoid such errors it has two additional distinct tRNA(Ile)-dependent editing activities. One activity is designated as 'pretransfer' editing and involves the hydrolysis of activated Val-AMP. The other activity is designated 'posttransfer' editing and involves deacylation of mischarged Val-tRNA(Ile). The chain is Isoleucine--tRNA ligase 1 from Bacillus thuringiensis subsp. konkukian (strain 97-27).